The chain runs to 513 residues: ATP synthase subunit alpha (513 aa).

169–176 (GDRQTGKT) provides a ligand contact to ATP.

The protein belongs to the ATPase alpha/beta chains family. As to quaternary structure, F-type ATPases have 2 components, CF(1) - the catalytic core - and CF(0) - the membrane proton channel. CF(1) has five subunits: alpha(3), beta(3), gamma(1), delta(1), epsilon(1). CF(0) has three main subunits: a(1), b(2) and c(9-12). The alpha and beta chains form an alternating ring which encloses part of the gamma chain. CF(1) is attached to CF(0) by a central stalk formed by the gamma and epsilon chains, while a peripheral stalk is formed by the delta and b chains.

The protein localises to the cell inner membrane. The enzyme catalyses ATP + H2O + 4 H(+)(in) = ADP + phosphate + 5 H(+)(out). Functionally, produces ATP from ADP in the presence of a proton gradient across the membrane. The alpha chain is a regulatory subunit. This chain is ATP synthase subunit alpha, found in Cupriavidus metallidurans (strain ATCC 43123 / DSM 2839 / NBRC 102507 / CH34) (Ralstonia metallidurans).